We begin with the raw amino-acid sequence, 448 residues long: Nicotinate phosphoribosyltransferase pncB1 (448 aa).

The segment at 1–21 (MGPPPAARRREGEPDNQDPAG) is disordered. Phosphohistidine is present on His-212. The tract at residues 353–372 (RSSYKESPGGRKEALRRSRA) is disordered.

This sequence belongs to the NAPRTase family. Post-translationally, transiently phosphorylated on a His residue during the reaction cycle. Phosphorylation strongly increases the affinity for substrates and increases the rate of nicotinate D-ribonucleotide production. Dephosphorylation regenerates the low-affinity form of the enzyme, leading to product release.

It catalyses the reaction nicotinate + 5-phospho-alpha-D-ribose 1-diphosphate + ATP + H2O = nicotinate beta-D-ribonucleotide + ADP + phosphate + diphosphate. The protein operates within cofactor biosynthesis; NAD(+) biosynthesis; nicotinate D-ribonucleotide from nicotinate: step 1/1. Involved in the Preiss-Handler pathway, which is a recycling route that permits the salvage of free nicotinamide (NM) and nicotinic acid (Na) involved in the NAD biosynthesis. Catalyzes the synthesis of beta-nicotinate D-ribonucleotide from nicotinate and 5-phospho-D-ribose 1-phosphate at the expense of ATP. It is not able to use nicotinamide. PncB1 contributes to basal NAD level. This Mycobacterium tuberculosis (strain ATCC 25618 / H37Rv) protein is Nicotinate phosphoribosyltransferase pncB1 (pncB1).